The following is a 347-amino-acid chain: Phosphoribosylformylglycinamidine cyclo-ligase (347 aa).

This sequence belongs to the AIR synthase family.

It localises to the cytoplasm. It catalyses the reaction 2-formamido-N(1)-(5-O-phospho-beta-D-ribosyl)acetamidine + ATP = 5-amino-1-(5-phospho-beta-D-ribosyl)imidazole + ADP + phosphate + H(+). Its pathway is purine metabolism; IMP biosynthesis via de novo pathway; 5-amino-1-(5-phospho-D-ribosyl)imidazole from N(2)-formyl-N(1)-(5-phospho-D-ribosyl)glycinamide: step 2/2. This is Phosphoribosylformylglycinamidine cyclo-ligase from Syntrophus aciditrophicus (strain SB).